Here is a 512-residue protein sequence, read N- to C-terminus: Glutathione-binding protein GsiB (512 aa).

Residues 1 to 26 (MTQFITHKWLAALGLASSIAAFPALA) form the signal peptide.

The protein belongs to the bacterial solute-binding protein 5 family. In terms of assembly, the complex is composed of two ATP-binding proteins (GsiA), two transmembrane proteins (GsiC and GsiD) and a solute-binding protein (GsiB).

It is found in the periplasm. Functionally, part of the ABC transporter complex GsiABCD involved in glutathione import. Binds glutathione. The protein is Glutathione-binding protein GsiB of Salmonella choleraesuis (strain SC-B67).